Consider the following 476-residue polypeptide: Bifunctional protein HldE (476 aa).

The tract at residues 1-319 is ribokinase; it reads MKVTLPAFEK…EALKSHQGES (319 aa). 195 to 198 contacts ATP; sequence NMSE. Asp-264 is a catalytic residue. The tract at residues 345–476 is cytidylyltransferase; that stretch reads MTNGCFDILH…AIIQNIMSRH (132 aa).

It in the N-terminal section; belongs to the carbohydrate kinase PfkB family. In the C-terminal section; belongs to the cytidylyltransferase family. In terms of assembly, homodimer.

It catalyses the reaction D-glycero-beta-D-manno-heptose 7-phosphate + ATP = D-glycero-beta-D-manno-heptose 1,7-bisphosphate + ADP + H(+). The catalysed reaction is D-glycero-beta-D-manno-heptose 1-phosphate + ATP + H(+) = ADP-D-glycero-beta-D-manno-heptose + diphosphate. It participates in nucleotide-sugar biosynthesis; ADP-L-glycero-beta-D-manno-heptose biosynthesis; ADP-L-glycero-beta-D-manno-heptose from D-glycero-beta-D-manno-heptose 7-phosphate: step 1/4. The protein operates within nucleotide-sugar biosynthesis; ADP-L-glycero-beta-D-manno-heptose biosynthesis; ADP-L-glycero-beta-D-manno-heptose from D-glycero-beta-D-manno-heptose 7-phosphate: step 3/4. Functionally, catalyzes the phosphorylation of D-glycero-D-manno-heptose 7-phosphate at the C-1 position to selectively form D-glycero-beta-D-manno-heptose-1,7-bisphosphate. Catalyzes the ADP transfer from ATP to D-glycero-beta-D-manno-heptose 1-phosphate, yielding ADP-D-glycero-beta-D-manno-heptose. The chain is Bifunctional protein HldE from Shewanella amazonensis (strain ATCC BAA-1098 / SB2B).